A 286-amino-acid polypeptide reads, in one-letter code: MISSKTSFIALIGNPVSHSLSPIMQNAALQYLGLDLIYIAIPCKDEDLELVLNSLKKINCKGLNITIPHKEKVFNLCSEISSIASKLKAINTLRLNSEKEWSGTNTDVEGFIYPLKNLNLTKKKSIVLGSGGAARSVIQGLINLNLSKISVISRNKSSVEELIKDFGNQIQLQGLLNTNNEVQNLIEEANLVVNTTPVGMKTAKHEMNVLPYGESFWRSLNSKTIVYDLIYNPAPTHLLKFSANKGCRTIDGLQMLVAQGLKSLSFWTNGLEVPFHIMNDALKNHL.

Shikimate-binding positions include 19–21 and threonine 66; that span reads SLS. Lysine 70 functions as the Proton acceptor in the catalytic mechanism. Asparagine 91 and aspartate 107 together coordinate shikimate. Residues 129–133 and leucine 229 contribute to the NADP(+) site; that span reads GSGGA. Tyrosine 231 lines the shikimate pocket. Glycine 252 is a binding site for NADP(+).

It belongs to the shikimate dehydrogenase family. As to quaternary structure, homodimer.

It catalyses the reaction shikimate + NADP(+) = 3-dehydroshikimate + NADPH + H(+). Its pathway is metabolic intermediate biosynthesis; chorismate biosynthesis; chorismate from D-erythrose 4-phosphate and phosphoenolpyruvate: step 4/7. Functionally, involved in the biosynthesis of the chorismate, which leads to the biosynthesis of aromatic amino acids. Catalyzes the reversible NADPH linked reduction of 3-dehydroshikimate (DHSA) to yield shikimate (SA). The chain is Shikimate dehydrogenase (NADP(+)) from Prochlorococcus marinus (strain MIT 9215).